We begin with the raw amino-acid sequence, 313 residues long: Phosphoenolpyruvate phosphomutase (313 aa).

The Nucleophile role is filled by Asp-69.

This sequence belongs to the isocitrate lyase/PEP mutase superfamily. PEP mutase family.

The catalysed reaction is phosphoenolpyruvate + H(+) = 3-phosphonopyruvate. It participates in secondary metabolite biosynthesis; bialaphos biosynthesis. Formation of a carbon-phosphorus bond by converting phosphoenolpyruvate (PEP) to phosphonopyruvate (P-Pyr). The polypeptide is Phosphoenolpyruvate phosphomutase (bcpB) (Streptomyces hygroscopicus).